The primary structure comprises 520 residues: GMP synthase [glutamine-hydrolyzing] (520 aa).

In terms of domain architecture, Glutamine amidotransferase type-1 spans 12–205; that stretch reads KIIVLDYGSQ…AISICGARGD (194 aa). Cys-89 acts as the Nucleophile in catalysis. Catalysis depends on residues His-179 and Glu-181. The region spanning 206-395 is the GMPS ATP-PPase domain; the sequence is WSMDNFIDME…LGMPEEIVWR (190 aa). ATP is bound at residue 233–239; sequence SGGVDSS.

In terms of assembly, homodimer.

The enzyme catalyses XMP + L-glutamine + ATP + H2O = GMP + L-glutamate + AMP + diphosphate + 2 H(+). Its pathway is purine metabolism; GMP biosynthesis; GMP from XMP (L-Gln route): step 1/1. Catalyzes the synthesis of GMP from XMP. This Streptococcus pyogenes serotype M6 (strain ATCC BAA-946 / MGAS10394) protein is GMP synthase [glutamine-hydrolyzing].